Consider the following 414-residue polypeptide: Serine/threonine transporter SstT (414 aa).

8 consecutive transmembrane segments (helical) span residues 16 to 36, 46 to 66, 84 to 104, 143 to 163, 180 to 200, 219 to 239, 300 to 320, and 332 to 352; these read GSLV…AWIS, LGTL…LMLV, ILFL…VFSF, ALLN…GFAL, AVTF…FGLV, LVVL…LLVF, MAGA…TLGV, and VVAS…LLLI.

Belongs to the dicarboxylate/amino acid:cation symporter (DAACS) (TC 2.A.23) family.

The protein localises to the cell inner membrane. The enzyme catalyses L-serine(in) + Na(+)(in) = L-serine(out) + Na(+)(out). It catalyses the reaction L-threonine(in) + Na(+)(in) = L-threonine(out) + Na(+)(out). Involved in the import of serine and threonine into the cell, with the concomitant import of sodium (symport system). The protein is Serine/threonine transporter SstT of Salmonella agona (strain SL483).